We begin with the raw amino-acid sequence, 218 residues long: MRLILLGAPGAGKGTQAQFICERFDIPQISTGDMLRAAVKEGSELGLKVKEIMNSGGLVSDDIIIALVKERIAQPDCANGFLFDGFPRTIPQADAMKEANVKLDHVLEVAVDDEEIVTRLAGRRVHPGSGRVYHVDYNPPKEEGKDDVTGEALIQRDDDREATVRNRLSVYHEQTEPLVQYYREWAQQDPQTAPAYHRVEGTGSVEAIRQQVLTALEG.

10–15 contributes to the ATP binding site; the sequence is GAGKGT. Residues 30 to 59 are NMP; sequence STGDMLRAAVKEGSELGLKVKEIMNSGGLV. Residues Thr-31, Arg-36, 57–59, 85–88, and Gln-92 contribute to the AMP site; these read GLV and GFPR. The LID stretch occupies residues 122 to 159; it reads GRRVHPGSGRVYHVDYNPPKEEGKDDVTGEALIQRDDD. ATP is bound by residues Arg-123 and 132-133; that span reads VY. Positions 156 and 167 each coordinate AMP. Gly-203 is a binding site for ATP.

This sequence belongs to the adenylate kinase family. As to quaternary structure, monomer.

It localises to the cytoplasm. The enzyme catalyses AMP + ATP = 2 ADP. The protein operates within purine metabolism; AMP biosynthesis via salvage pathway; AMP from ADP: step 1/1. Catalyzes the reversible transfer of the terminal phosphate group between ATP and AMP. Plays an important role in cellular energy homeostasis and in adenine nucleotide metabolism. The chain is Adenylate kinase from Chromohalobacter salexigens (strain ATCC BAA-138 / DSM 3043 / CIP 106854 / NCIMB 13768 / 1H11).